The following is a 60-amino-acid chain: U20-myrmicitoxin-Mri1a (60 aa).

The signal sequence occupies residues 1–24 (MKSVILLFAVIAIIVAVIIPAING). The propeptide occupies 25-34 (ESSSNPSANA).

It belongs to the formicidae venom precursor-01 superfamily. Expressed by the venom gland.

It localises to the secreted. Induces paralysis 5 minutes after injection into blowflies (L.caesar), and then death within 24 hours. May have antimicrobial properties, like most ant linear peptides. This Manica rubida (European giant red ant) protein is U20-myrmicitoxin-Mri1a.